Reading from the N-terminus, the 84-residue chain is MSKEKVARFNKQHFVVGLKETLKALKKDQVTSLIIAEDVEVYLMTRVLSQINQKNIPVSFFKSKHALGKHVGINVNATIVALIK.

This sequence belongs to the eukaryotic ribosomal protein eL8 family.

The chain is RNA-binding protein SAHV_0542 from Staphylococcus aureus (strain Mu3 / ATCC 700698).